Here is an 837-residue protein sequence, read N- to C-terminus: Tuftelin-interacting protein 11 (837 aa).

Composition is skewed to basic and acidic residues over residues 1–13 (MSLS…GEGH) and 44–64 (QTKE…EERP). 3 disordered regions span residues 1–21 (MSLS…DDER), 34–73 (EFNP…RARD), and 85–135 (LKKG…FAGG). The tract at residues 1-50 (MSLSHLYRDGEGHLDDDDDERENFEITDWDLQNEFNPNRQRHWQTKEEAT) is required for interaction with DHX15. Residues Ser2, Ser59, Ser95, and Ser98 each carry the phosphoserine modification. Residues 91–100 (EEADSEDSDA) show a composition bias toward acidic residues. Residues 101 to 116 (EEKPVKQEDFPKDLGP) are compositionally biased toward basic and acidic residues. Ser144 bears the Phosphoserine mark. One can recognise a G-patch domain in the interval 149 to 195 (TKGIGQKLLQKMGYVPGRGLGKNAQGIINPIEAKQRKGKGAVGAYGS). Residues 183–236 (QRKGKGAVGAYGSERTTQSLQDFPVADSEEEAEEEFQKELSQWRKDPSGSKKKP) are disordered. Ser210 is subject to Phosphoserine. Over residues 217–231 (EFQKELSQWRKDPSG) the composition is skewed to basic and acidic residues. A Nuclear localization signal motif is present at residues 700-705 (VKDKFN). Positions 710-734 (IMNRAVSSNVGAYMQPGARENIAYL) are required for nuclear speckle localization.

Belongs to the TFP11/STIP family. Identified in the spliceosome C complex. Found in the Intron Large (IL) complex, a post-mRNA release spliceosomal complex containing the excised intron, U2, U5 and U6 snRNPs, and splicing factors. Interacts with TUFT1. Interacts with DHX15; indicative for a recruitment of DHX15 to the IL complex. Interacts with GCFC2.

The protein localises to the cytoplasm. Its subcellular location is the nucleus. Functionally, involved in pre-mRNA splicing, specifically in spliceosome disassembly during late-stage splicing events. Intron turnover seems to proceed through reactions in two lariat-intron associated complexes termed Intron Large (IL) and Intron Small (IS). In cooperation with DHX15 seems to mediate the transition of the U2, U5 and U6 snRNP-containing IL complex to the snRNP-free IS complex leading to efficient debranching and turnover of excised introns. May play a role in the differentiation of ameloblasts and odontoblasts or in the forming of the enamel extracellular matrix. The protein is Tuftelin-interacting protein 11 (Tfip11) of Rattus norvegicus (Rat).